The sequence spans 160 residues: uncharacterized protein (160 aa).

The helical transmembrane segment at 27–47 (VMNSYFIAGCGPAVCYYAVSW) threads the bilayer.

It localises to the membrane. This is an uncharacterized protein from Homo sapiens (Human).